The sequence spans 365 residues: Putrescine carbamoyltransferase (365 aa).

Carbamoyl phosphate-binding positions include 54–58 (STRTR), Arg105, and His132. 277 to 280 (HCLP) lines the putrescine pocket.

This sequence belongs to the aspartate/ornithine carbamoyltransferase superfamily. PTCase family. As to quaternary structure, homotrimer.

Its subcellular location is the cytoplasm. It carries out the reaction carbamoyl phosphate + putrescine = N-carbamoylputrescine + phosphate + H(+). Its pathway is amine and polyamine biosynthesis; putrescine biosynthesis via agmatine pathway; putrescine from N-carbamoylputrescine (transferase route): step 1/1. In terms of biological role, catalyzes the phosphorolysis of N-carbamoylputrescine to form carbamoyl phosphate and putrescine. Is involved in the degradation pathway of the polyamine agmatine. This chain is Putrescine carbamoyltransferase, found in Mycoplasma mycoides subsp. mycoides SC (strain CCUG 32753 / NCTC 10114 / PG1).